The primary structure comprises 319 residues: Beta-sarcoglycan (319 aa).

Residues 1 to 10 (MAAAAAAAAA) show a composition bias toward low complexity. Residues 1–33 (MAAAAAAAAAEQQSSNGPVKKSMREKAVERRNV) are disordered. Residues 1-66 (MAAAAAAAAA…GLRGRKGNLA (66 aa)) lie on the Cytoplasmic side of the membrane. Positions 22 to 33 (SMREKAVERRNV) are enriched in basic and acidic residues. Residues 67–87 (ICVIILLFILAVINLIITLVI) form a helical; Signal-anchor for type II membrane protein membrane-spanning segment. The Extracellular portion of the chain corresponds to 88–318 (WAVIRIGPNG…QISDNPCGNT (231 aa)). Asn-159, Asn-212, and Asn-259 each carry an N-linked (GlcNAc...) asparagine glycan. 2 cysteine pairs are disulfide-bonded: Cys-289–Cys-315 and Cys-291–Cys-308.

This sequence belongs to the sarcoglycan beta/delta/gamma/zeta family. In terms of assembly, cross-link to form 2 major subcomplexes: one consisting of SGCB, SGCD and SGCG and the other consisting of SGCB and SGCD. The association between SGCB and SGCG is particularly strong while SGCA is loosely associated with the other sarcoglycans. Disulfide bonds are present.

The protein localises to the cell membrane. Its subcellular location is the sarcolemma. It localises to the cytoplasm. The protein resides in the cytoskeleton. Component of the sarcoglycan complex, a subcomplex of the dystrophin-glycoprotein complex which forms a link between the F-actin cytoskeleton and the extracellular matrix. This chain is Beta-sarcoglycan (SGCB), found in Pongo abelii (Sumatran orangutan).